The chain runs to 155 residues: 6,7-dimethyl-8-ribityllumazine synthase (155 aa).

5-amino-6-(D-ribitylamino)uracil-binding positions include Phe26, 60–62 (ALE), and 84–86 (AVI). 89-90 (ET) contacts (2S)-2-hydroxy-3-oxobutyl phosphate. His92 functions as the Proton donor in the catalytic mechanism. Asn117 is a binding site for 5-amino-6-(D-ribitylamino)uracil. Residue Arg131 coordinates (2S)-2-hydroxy-3-oxobutyl phosphate.

This sequence belongs to the DMRL synthase family.

It catalyses the reaction (2S)-2-hydroxy-3-oxobutyl phosphate + 5-amino-6-(D-ribitylamino)uracil = 6,7-dimethyl-8-(1-D-ribityl)lumazine + phosphate + 2 H2O + H(+). It functions in the pathway cofactor biosynthesis; riboflavin biosynthesis; riboflavin from 2-hydroxy-3-oxobutyl phosphate and 5-amino-6-(D-ribitylamino)uracil: step 1/2. Catalyzes the formation of 6,7-dimethyl-8-ribityllumazine by condensation of 5-amino-6-(D-ribitylamino)uracil with 3,4-dihydroxy-2-butanone 4-phosphate. This is the penultimate step in the biosynthesis of riboflavin. In Chromobacterium violaceum (strain ATCC 12472 / DSM 30191 / JCM 1249 / CCUG 213 / NBRC 12614 / NCIMB 9131 / NCTC 9757 / MK), this protein is 6,7-dimethyl-8-ribityllumazine synthase.